The primary structure comprises 785 residues: Polyribonucleotide nucleotidyltransferase (785 aa).

Mg(2+) contacts are provided by Asp-516 and Asp-522. The KH domain occupies 582 to 641; sequence PRVTTVKIPVDKIGMVIGPKGQTINAIQDETGAEISIEDDGTIYVGATNGPAAQAAVERI. Residues 653–722 enclose the S1 motif domain; sequence GDRFLGTVVK…QRGKIYLDKV (70 aa). A disordered region spans residues 722–785; the sequence is VRPEGAEAPA…SRPRRRTRRS (64 aa). Residues 734 to 764 are compositionally biased toward basic and acidic residues; it reads AAERPAGRDRGDRGPRDRGDRGGRGPDRGDS.

This sequence belongs to the polyribonucleotide nucleotidyltransferase family. It depends on Mg(2+) as a cofactor.

It localises to the cytoplasm. The catalysed reaction is RNA(n+1) + phosphate = RNA(n) + a ribonucleoside 5'-diphosphate. In terms of biological role, involved in mRNA degradation. Catalyzes the phosphorolysis of single-stranded polyribonucleotides processively in the 3'- to 5'-direction. The chain is Polyribonucleotide nucleotidyltransferase from Salinispora tropica (strain ATCC BAA-916 / DSM 44818 / JCM 13857 / NBRC 105044 / CNB-440).